Consider the following 175-residue polypeptide: MNTSSRIQLPSSNDAHVYDGRSNEPKASKRSYVNLTRQMRPKDALKMNISSPNLKDLSKFADPDAQQWLEGYLAGKLEDNSKTPRSNFVDPLYEELNARRKPNKPVWSLSGPLPHVLGNSVVEKLEARSRASSVSNSRLNSRTNSSVSLKGMDGSSSWKNKIKNAVSNVTDQSKR.

Positions 1-14 are enriched in polar residues; it reads MNTSSRIQLPSSND. Disordered regions lie at residues 1–31 and 127–175; these read MNTS…SKRS and ARSR…QSKR. Over residues 16-27 the composition is skewed to basic and acidic residues; that stretch reads HVYDGRSNEPKA. Residues 130–149 show a composition bias toward low complexity; the sequence is RASSVSNSRLNSRTNSSVSL. The span at 154–175 shows a compositional bias: polar residues; the sequence is GSSSWKNKIKNAVSNVTDQSKR.

Its subcellular location is the cytoplasm. It localises to the nucleus. This is an uncharacterized protein from Schizosaccharomyces pombe (strain 972 / ATCC 24843) (Fission yeast).